The following is a 184-amino-acid chain: NADH-quinone oxidoreductase subunit B (184 aa).

Positions 37, 38, 103, and 132 each coordinate [4Fe-4S] cluster.

Belongs to the complex I 20 kDa subunit family. NDH-1 is composed of 14 different subunits. Subunits NuoB, C, D, E, F, and G constitute the peripheral sector of the complex. [4Fe-4S] cluster serves as cofactor.

The protein localises to the cell membrane. It catalyses the reaction a quinone + NADH + 5 H(+)(in) = a quinol + NAD(+) + 4 H(+)(out). In terms of biological role, NDH-1 shuttles electrons from NADH, via FMN and iron-sulfur (Fe-S) centers, to quinones in the respiratory chain. The immediate electron acceptor for the enzyme in this species is believed to be a menaquinone. Couples the redox reaction to proton translocation (for every two electrons transferred, four hydrogen ions are translocated across the cytoplasmic membrane), and thus conserves the redox energy in a proton gradient. The sequence is that of NADH-quinone oxidoreductase subunit B from Mycolicibacterium smegmatis (strain ATCC 700084 / mc(2)155) (Mycobacterium smegmatis).